The following is a 296-amino-acid chain: Hca operon transcriptional activator HcaR (296 aa).

The 58-residue stretch at 1–58 (MELRHLRYFVAVAQALNFTRAAEKLHTSQPSLSSQIRDLENCVGVPLLVRDKRKVALT) folds into the HTH lysR-type domain. Residues 18 to 38 (FTRAAEKLHTSQPSLSSQIRD) constitute a DNA-binding region (H-T-H motif).

This sequence belongs to the LysR transcriptional regulatory family.

Functionally, transcriptional activator of the hca operon for 3-phenylpropionic acid catabolism. In Escherichia coli (strain K12), this protein is Hca operon transcriptional activator HcaR (hcaR).